Here is a 148-residue protein sequence, read N- to C-terminus: UPF0260 protein ESA_01462 (148 aa).

This sequence belongs to the UPF0260 family.

The sequence is that of UPF0260 protein ESA_01462 from Cronobacter sakazakii (strain ATCC BAA-894) (Enterobacter sakazakii).